Here is a 485-residue protein sequence, read N- to C-terminus: Probable RNA-binding protein 46 (485 aa).

3 consecutive RRM domains span residues 61–139, 141–223, and 236–308; these read CEVF…VSLD, CRLF…WADP, and KVLY…LAKP.

In terms of assembly, interacts with YTHDC2, MEIOC, MOV10, CNOT6L, DDX4, UPF1 and PABPC1.

Its subcellular location is the cytoplasm. Essential for male and female fertility, playing a crucial role in regulating germ cell development by ensuring the proper progression of meiosis prophase I. Regulates mitotic-to-meiotic transition in spermatogenesis by forming a complex with MEIOC and YTHDC2 which recognizes and down-regulates mitotic transcripts for a successful meiotic entry. Required for normal synaptonemal complex formation during meiosis, binding meiotic cohesin subunit mRNAs containing GCCUAU/GUUCGA motifs in their 3'UTRs regions and positively regulating their translation. Required for spermatogonial differentiation in both developing and adult testis. This Macaca fascicularis (Crab-eating macaque) protein is Probable RNA-binding protein 46 (RBM46).